The following is a 177-amino-acid chain: Transcription antitermination protein NusB (177 aa).

The interval 1-35 is disordered; the sequence is MTDSTHPTPSARPPRQPRTGTTGTGARKAGSKSGR. The segment covering 17-28 has biased composition (low complexity); it reads PRTGTTGTGARK.

It belongs to the NusB family.

In terms of biological role, involved in transcription antitermination. Required for transcription of ribosomal RNA (rRNA) genes. Binds specifically to the boxA antiterminator sequence of the ribosomal RNA (rrn) operons. The sequence is that of Transcription antitermination protein NusB from Acidovorax sp. (strain JS42).